A 380-amino-acid polypeptide reads, in one-letter code: Chaperone protein DnaJ (380 aa).

The 68-residue stretch at 5–72 (DYYETLGVAK…QKRAAYDQYG (68 aa)) folds into the J domain. The segment at 140–218 (GKDTQIRIPS…CNGAGRIKSN (79 aa)) adopts a CR-type zinc-finger fold. Zn(2+) is bound by residues cysteine 153, cysteine 156, cysteine 170, cysteine 173, cysteine 192, cysteine 195, cysteine 206, and cysteine 209. 4 CXXCXGXG motif repeats span residues 153 to 160 (CSTCDGTG), 170 to 177 (CPTCSGSG), 192 to 199 (CPSCHGTG), and 206 to 213 (CTACNGAG). Positions 357–380 (LKKGGERHSPNAKSWTDRVKDLFK) are disordered.

The protein belongs to the DnaJ family. In terms of assembly, homodimer. Zn(2+) is required as a cofactor.

The protein resides in the cytoplasm. In terms of biological role, participates actively in the response to hyperosmotic and heat shock by preventing the aggregation of stress-denatured proteins and by disaggregating proteins, also in an autonomous, DnaK-independent fashion. Unfolded proteins bind initially to DnaJ; upon interaction with the DnaJ-bound protein, DnaK hydrolyzes its bound ATP, resulting in the formation of a stable complex. GrpE releases ADP from DnaK; ATP binding to DnaK triggers the release of the substrate protein, thus completing the reaction cycle. Several rounds of ATP-dependent interactions between DnaJ, DnaK and GrpE are required for fully efficient folding. Also involved, together with DnaK and GrpE, in the DNA replication of plasmids through activation of initiation proteins. The polypeptide is Chaperone protein DnaJ (Methylibium petroleiphilum (strain ATCC BAA-1232 / LMG 22953 / PM1)).